Here is a 165-residue protein sequence, read N- to C-terminus: uncharacterized protein (165 aa).

The signal sequence occupies residues 1 to 17 (MIRGFFLILLFLLLAFF).

This is an uncharacterized protein from Aquifex aeolicus (strain VF5).